We begin with the raw amino-acid sequence, 455 residues long: Ribulose bisphosphate carboxylase large chain (455 aa).

An N6,N6,N6-trimethyllysine modification is found at lysine 5. Positions 114 and 164 each coordinate substrate. Lysine 166 (proton acceptor) is an active-site residue. Substrate is bound at residue lysine 168. The Mg(2+) site is built by lysine 192, aspartate 194, and glutamate 195. At lysine 192 the chain carries N6-carboxylysine. The active-site Proton acceptor is histidine 285. Residues arginine 286, histidine 318, and serine 370 each contribute to the substrate site.

This sequence belongs to the RuBisCO large chain family. Type I subfamily. In terms of assembly, heterohexadecamer of 8 large chains and 8 small chains. It depends on Mg(2+) as a cofactor.

The protein resides in the plastid. It is found in the chloroplast. It catalyses the reaction 2 (2R)-3-phosphoglycerate + 2 H(+) = D-ribulose 1,5-bisphosphate + CO2 + H2O. The catalysed reaction is D-ribulose 1,5-bisphosphate + O2 = 2-phosphoglycolate + (2R)-3-phosphoglycerate + 2 H(+). Functionally, ruBisCO catalyzes two reactions: the carboxylation of D-ribulose 1,5-bisphosphate, the primary event in carbon dioxide fixation, as well as the oxidative fragmentation of the pentose substrate in the photorespiration process. Both reactions occur simultaneously and in competition at the same active site. This Tamarindus indica (Tamarind) protein is Ribulose bisphosphate carboxylase large chain.